A 132-amino-acid chain; its full sequence is Small ribosomal subunit protein uS8 (132 aa).

It belongs to the universal ribosomal protein uS8 family. Part of the 30S ribosomal subunit. Contacts proteins S5 and S12.

Functionally, one of the primary rRNA binding proteins, it binds directly to 16S rRNA central domain where it helps coordinate assembly of the platform of the 30S subunit. In Nocardia farcinica (strain IFM 10152), this protein is Small ribosomal subunit protein uS8.